The sequence spans 1820 residues: Cation channel sperm-associated targeting subunit tau (1820 aa).

The C2 domain maps to 87–222; that stretch reads DSEELEITQE…QKGCFIEEVQ (136 aa). Disordered stretches follow at residues 360-383, 403-443, 695-722, and 838-857; these read SEET…ELEN, LLDN…TEVH, EVSM…SSME, and SSTK…SGSS. The segment covering 415–443 has biased composition (polar residues); it reads PTLNQSDQDNSTADASKNDESTPSPTEVH.

As to quaternary structure, component of the CatSper complex or CatSpermasome composed of the core pore-forming members CATSPER1, CATSPER2, CATSPER3 and CATSPER4 as well as auxiliary members CATSPERB, CATSPERG, CATSPERD, CATSPERE, CATSPERZ, C2CD6/CATSPERT, TMEM249, TMEM262 and EFCAB9. HSPA1 may be an additional auxiliary complex member. The core complex members CATSPER1, CATSPER2, CATSPER3 and CATSPER4 form a heterotetrameric channel. The auxiliary CATSPERB, CATSPERG, CATSPERD and CATSPERE subunits form a pavilion-like structure over the pore which stabilizes the complex through interactions with CATSPER4, CATSPER3, CATSPER1 and CATSPER2 respectively. SLCO6C1 interacts with CATSPERE and TMEM262/CATSPERH interacts with CATSPERB, further stabilizing the complex. C2CD6/CATSPERT interacts at least with CATSPERD and is required for targeting the CatSper complex in the flagellar membrane. Expressed in testis (at protein level).

The protein localises to the cell projection. The protein resides in the cilium. Its subcellular location is the flagellum membrane. In terms of biological role, auxiliary component of the CatSper complex, a complex involved in sperm cell hyperactivation. Sperm cell hyperactivation is needed for sperm motility which is essential late in the preparation of sperm for fertilization. Required for CatSper complex targeting and trafficking into the quadrilinear nanodomains. Targets the preassembled CatSper complexes to elongating flagella, where it links the channel-carrying vesicles and motor proteins. This Homo sapiens (Human) protein is Cation channel sperm-associated targeting subunit tau.